A 287-amino-acid chain; its full sequence is Ribosomal RNA small subunit methyltransferase A (287 aa).

S-adenosyl-L-methionine-binding residues include N28, L30, G55, E77, D103, and N123.

It belongs to the class I-like SAM-binding methyltransferase superfamily. rRNA adenine N(6)-methyltransferase family. RsmA subfamily.

The protein localises to the cytoplasm. The catalysed reaction is adenosine(1518)/adenosine(1519) in 16S rRNA + 4 S-adenosyl-L-methionine = N(6)-dimethyladenosine(1518)/N(6)-dimethyladenosine(1519) in 16S rRNA + 4 S-adenosyl-L-homocysteine + 4 H(+). Its function is as follows. Specifically dimethylates two adjacent adenosines (A1518 and A1519) in the loop of a conserved hairpin near the 3'-end of 16S rRNA in the 30S particle. May play a critical role in biogenesis of 30S subunits. This Rhodopseudomonas palustris (strain BisB5) protein is Ribosomal RNA small subunit methyltransferase A.